We begin with the raw amino-acid sequence, 467 residues long: Ribosomal protein uS12 methylthiotransferase RimO (467 aa).

The MTTase N-terminal domain occupies 1–110 (MDLHGCAKNQ…LPQLIDSMFP (110 aa)). [4Fe-4S] cluster contacts are provided by cysteine 6, cysteine 42, cysteine 73, cysteine 153, cysteine 157, and cysteine 160. The region spanning 139–386 (LNFPRSTYIK…QNAQTSITEK (248 aa)) is the Radical SAM core domain. The TRAM domain occupies 389–467 (DSFIGKEIEV…NGFDLEAVAV (79 aa)).

Belongs to the methylthiotransferase family. RimO subfamily. Requires [4Fe-4S] cluster as cofactor.

It localises to the cytoplasm. It catalyses the reaction L-aspartate(89)-[ribosomal protein uS12]-hydrogen + (sulfur carrier)-SH + AH2 + 2 S-adenosyl-L-methionine = 3-methylsulfanyl-L-aspartate(89)-[ribosomal protein uS12]-hydrogen + (sulfur carrier)-H + 5'-deoxyadenosine + L-methionine + A + S-adenosyl-L-homocysteine + 2 H(+). Catalyzes the methylthiolation of an aspartic acid residue of ribosomal protein uS12. This Treponema denticola (strain ATCC 35405 / DSM 14222 / CIP 103919 / JCM 8153 / KCTC 15104) protein is Ribosomal protein uS12 methylthiotransferase RimO.